Here is a 219-residue protein sequence, read N- to C-terminus: Thiamine-phosphate synthase (219 aa).

4-amino-2-methyl-5-(diphosphooxymethyl)pyrimidine-binding positions include 48 to 52 and asparagine 84; that span reads QFRQK. Positions 85 and 104 each coordinate Mg(2+). Serine 123 serves as a coordination point for 4-amino-2-methyl-5-(diphosphooxymethyl)pyrimidine. 150–152 contacts 2-[(2R,5Z)-2-carboxy-4-methylthiazol-5(2H)-ylidene]ethyl phosphate; that stretch reads TPS. Lysine 153 provides a ligand contact to 4-amino-2-methyl-5-(diphosphooxymethyl)pyrimidine. Residues glycine 181 and 199–200 each bind 2-[(2R,5Z)-2-carboxy-4-methylthiazol-5(2H)-ylidene]ethyl phosphate; that span reads IS.

This sequence belongs to the thiamine-phosphate synthase family. Mg(2+) is required as a cofactor.

The catalysed reaction is 2-[(2R,5Z)-2-carboxy-4-methylthiazol-5(2H)-ylidene]ethyl phosphate + 4-amino-2-methyl-5-(diphosphooxymethyl)pyrimidine + 2 H(+) = thiamine phosphate + CO2 + diphosphate. It catalyses the reaction 2-(2-carboxy-4-methylthiazol-5-yl)ethyl phosphate + 4-amino-2-methyl-5-(diphosphooxymethyl)pyrimidine + 2 H(+) = thiamine phosphate + CO2 + diphosphate. It carries out the reaction 4-methyl-5-(2-phosphooxyethyl)-thiazole + 4-amino-2-methyl-5-(diphosphooxymethyl)pyrimidine + H(+) = thiamine phosphate + diphosphate. It functions in the pathway cofactor biosynthesis; thiamine diphosphate biosynthesis; thiamine phosphate from 4-amino-2-methyl-5-diphosphomethylpyrimidine and 4-methyl-5-(2-phosphoethyl)-thiazole: step 1/1. In terms of biological role, condenses 4-methyl-5-(beta-hydroxyethyl)thiazole monophosphate (THZ-P) and 2-methyl-4-amino-5-hydroxymethyl pyrimidine pyrophosphate (HMP-PP) to form thiamine monophosphate (TMP). This is Thiamine-phosphate synthase from Helicobacter pylori (strain ATCC 700392 / 26695) (Campylobacter pylori).